Consider the following 1481-residue polypeptide: RNA helicase aquarius (1481 aa).

Residues 1–416 (MAAPAQPKKI…LVSRHERRIS (416 aa)) form a helical region with structural similarity to ARM repeat domains region. The interval 417 to 1481 (QIQQLNQMPL…DAESVPTETE (1065 aa)) is required for assembly of the IB complex. Positions 754–773 (RSGKGKKRKDADGEEDDTEE) are disordered. ATP contacts are provided by residues Gln801, Gln806, and 826 to 831 (GTGKTD). Lys1055 bears the N6-acetyllysine mark. Residues 1396 to 1414 (EEGEEGQSQETEMEAEEET) show a composition bias toward acidic residues. Residues 1396-1481 (EEGEEGQSQE…DAESVPTETE (86 aa)) form a disordered region. The segment covering 1418–1448 (QGNLTPSPADASLSQETPAAQPDCSSQTEDT) has biased composition (polar residues). Residues 1455–1468 (ATAAEPVSAAAEAA) are compositionally biased toward low complexity.

Belongs to the CWF11 family. In terms of assembly, identified in the spliceosome C complex. Component of the XAB2 complex, a multimeric protein complex composed of XAB2, PRPF19, AQR, ZNF830, ISY1, and PPIE. Identified in a pentameric intron-binding (IB) complex composed of AQR, XAB2, ISY1, ZNF830 and PPIE that is incorporated into the spliceosome as a preassembled complex. The IB complex does not contain PRPF19. Within the spliceosome, interacts with SNRPA1, SF3B1, SF3B3, SF3A1 and SF3A2.

It localises to the nucleus. It is found in the nucleoplasm. It catalyses the reaction ATP + H2O = ADP + phosphate + H(+). Functionally, involved in pre-mRNA splicing as component of the spliceosome. Intron-binding spliceosomal protein required to link pre-mRNA splicing and snoRNP (small nucleolar ribonucleoprotein) biogenesis. Plays a key role in position-dependent assembly of intron-encoded box C/D small snoRNP, splicing being required for snoRNP assembly. May act by helping the folding of the snoRNA sequence. Binds to intron of pre-mRNAs in a sequence-independent manner, contacting the region between snoRNA and the branchpoint of introns (40 nucleotides upstream of the branchpoint) during the late stages of splicing. Has ATP-dependent RNA helicase activity and can unwind double-stranded RNA molecules with a 3' overhang (in vitro). This chain is RNA helicase aquarius (Aqr), found in Mus musculus (Mouse).